We begin with the raw amino-acid sequence, 530 residues long: Zinc finger protein ZIC 4 (530 aa).

Basic residues-rich tracts occupy residues 31–40 (HHPHHHHHPP) and 97–113 (NPHH…HHMA). Disordered stretches follow at residues 31-50 (HHPH…TGYP) and 87-138 (PGAL…SYSS). Residues 284 to 317 (LICKWIEEDQLPKKLCSKTFSTMHELVTHVTVEH) form a C2H2-type 1; atypical zinc finger. Residues 326 to 353 (HICFWEECPREGKPFKAKYKLVNHIRVH) form a C2H2-type 2; atypical zinc finger. 3 C2H2-type zinc fingers span residues 359 to 383 (FPCP…KRTH), 389 to 413 (FKCE…SHVH), and 419 to 443 (YNCK…MKVH). Residues 432 to 530 (HPSSLRKHMK…YSNWQATNTF (99 aa)) are disordered. Basic residues predominate over residues 435–444 (SLRKHMKVHC). Low complexity-rich tracts occupy residues 455 to 467 (SSIP…SSDS) and 474 to 485 (TSSQPEPPTSSQ). The segment covering 520–530 (SYSNWQATNTF) has biased composition (polar residues).

It belongs to the GLI C2H2-type zinc-finger protein family. As to expression, at mid-gastrula stage (stage 11.5), weakly expressed in the prospective neural fold. Expressed in the neural plate border region at early neurula stage (stage 15) with strongest expression in the prospective regions of the hyoid and branchial crests. Expression in the dorsal central nervous system (CNS) continues through late neurula stage and early tail bud stages with expression strongest in the olfactory placode and expression levels increasing as development progresses. Becomes expressed in somites.

The protein localises to the nucleus. Its function is as follows. May bind to DNA. Induces neural and neural crest differentiation. Does not induce anterior neural tissue. The chain is Zinc finger protein ZIC 4 (zic4) from Xenopus laevis (African clawed frog).